The primary structure comprises 337 residues: Putative carbonic anhydrase-like protein 2 (337 aa).

The signal sequence occupies residues 1-16 (MIPWLLTACIYPCVIG). An Alpha-carbonic anhydrase domain is found at 17–274 (PDFWGLLHGD…LNGRLVRTNI (258 aa)). Tyr-140 is an active-site residue. Residue Asn-188 is glycosylated (N-linked (GlcNAc...) asparagine). 212 to 213 (TF) contacts substrate.

The protein belongs to the alpha-carbonic anhydrase family.

The protein localises to the secreted. In Caenorhabditis elegans, this protein is Putative carbonic anhydrase-like protein 2 (cah-2).